Consider the following 323-residue polypeptide: Acetyl-coenzyme A carboxylase carboxyl transferase subunit alpha (323 aa).

The region spanning Arg39–Gln293 is the CoA carboxyltransferase C-terminal domain.

This sequence belongs to the AccA family. Acetyl-CoA carboxylase is a heterohexamer composed of biotin carboxyl carrier protein (AccB), biotin carboxylase (AccC) and two subunits each of ACCase subunit alpha (AccA) and ACCase subunit beta (AccD).

The protein localises to the cytoplasm. It catalyses the reaction N(6)-carboxybiotinyl-L-lysyl-[protein] + acetyl-CoA = N(6)-biotinyl-L-lysyl-[protein] + malonyl-CoA. Its pathway is lipid metabolism; malonyl-CoA biosynthesis; malonyl-CoA from acetyl-CoA: step 1/1. Functionally, component of the acetyl coenzyme A carboxylase (ACC) complex. First, biotin carboxylase catalyzes the carboxylation of biotin on its carrier protein (BCCP) and then the CO(2) group is transferred by the carboxyltransferase to acetyl-CoA to form malonyl-CoA. This chain is Acetyl-coenzyme A carboxylase carboxyl transferase subunit alpha, found in Burkholderia lata (strain ATCC 17760 / DSM 23089 / LMG 22485 / NCIMB 9086 / R18194 / 383).